We begin with the raw amino-acid sequence, 545 residues long: MESYKPVWLKGAVILAINLIDKGYKPVAVGLGERDFYIDVKSDTSITLDEVKKAINENVLANVSIENNQIVYKGNKVSIIEDKVSISTNLNPKYFEILNISTHHPNPNEQYVRIRGVAFETEEQLKDYLTWLEKAEETDHRLIGEKLDLFSFHEEAGSGLVLFHPKGQTIRNELIAFMREINDSMGYQEVYTSHVFKTDIWKISGHYTLYRDKLIVFNMEGDEYGVKPMNCPAHILIYKSKPRTYRDLPIRFSEFGHVYRWEKKGELYGLLRVRGFVQDDGHIFLREDQLREEIKMLISKTVEVWHKFGFKDDDIKPYLSTRPDESIGSDELWEKATNALISALQESGLKFGIKEKEGAFYGPKIDFEIRDSLGRWWQLSTIQVDFNLPERFKLEYIDKDGIKKRPVMVHRAIYGSIDRFVAILLEHFKGKLPTWLSSVQVRVLPITDEVNEYAEKVLNDMRKRRIRAEIDYAGETLSKRIKNAYDQGVPYILIVGKKEASEGTVTVRARGNIEVRNVKFEKFLELLITEIAQRDVEQTTVKALK.

A catalytic region spans residues 139–433 (DHRLIGEKLD…LLEHFKGKLP (295 aa)). Zn(2+)-binding residues include Cys-231, His-282, and His-410.

Belongs to the class-II aminoacyl-tRNA synthetase family. Homodimer. Probably interacts with its editing subunit. Zn(2+) serves as cofactor.

Its subcellular location is the cytoplasm. The enzyme catalyses tRNA(Thr) + L-threonine + ATP = L-threonyl-tRNA(Thr) + AMP + diphosphate + H(+). Catalyzes the attachment of threonine to tRNA(Thr) in a two-step reaction: L-threonine is first activated by ATP to form Thr-AMP and then transferred to the acceptor end of tRNA(Thr). Also activates L-serine and transfers it to tRNA(Thr) but cannot deacylate incorrectly charged amino acid; unlike most archaea the editing function is found in a freestanding protein. The protein is Threonine--tRNA ligase catalytic subunit of Saccharolobus islandicus (strain L.S.2.15 / Lassen #1) (Sulfolobus islandicus).